Consider the following 1733-residue polypeptide: MGQTVTTPLSLTLDHWKDVERTAHNQSVDVKKRRWVTFCSVEWPTFNVGWPQDGTFNRDIITQVKIKVFSPGPHGHPDQVPYIVTWEALAFDPPPWVKPFVHPKPPLPPSAPSLLPEPPLSTSPRSSLYPALTPSLGAKPKPQVLPDSGGPLIDLLTEDPPPYRDPGPPPSDRDRDDGEAAPAGEAPDPSPMASRLRGRRELPVADSTTSQAFPLRSGGNGQLQYWPFSSSDLYNWKNNNPSFSEDPGKLTALIESVLLTHQPTWDDCQQLLGTLLTGEEKQRVLLEARKAVRGEDGRPTQLPNEINDAFPLERPDWDYNTQRGRNHLVLYRQLLLAGLQNAGRSPTNLAKVKGITQGPNESPSAFLERLKEAYRRYTPYDPEDPGQETNVSMSFIWQSAPDIGRKLERLEDLKSKTLGDLVREAEKIFNKRETPEEREERIKRETEEKEERRRAEDEQKEKERDRRRHREMSKLLATVVSGQKQDRQGGERRRPQLDKDQCAYCKEKGHWAKDCPKKPRGPRGPRPQTSLLALDDQGGRGQEPPPEPRITLKVGGQPVTFLVDTGAQHSVLTQNPGPLSDKSAWVQGATGGKRYRWTTDRKVHLATGKVTHSFLHVPDCPYPLLGRDLLTKLNAQIHFEGSGAQVVGPRGQPLQVLTLNIEDEYRLHETSKEPDVSLGSTWLSDFPQAWAETGGMGLAVRQAPLIIPLKATSTPVSIKQYPMSQEARLGIKPHIQRLLDQGILVPCQSPWNTPLLPVKKPGTNDYRPVQDLREVNKRVEDIHPTVPNPYNLLSGLPPSHQWYTVLDLKDAFFCLRLHPTSQPLFAFEWRDPEMGISGQLTWTRLPQGFKNSPTLFDEALHRDLAGFRIQHPDLILLQYVDDLLLAATSELDCQQGTRALLQTLGDLGYRASAKKAQICQKQVKYLGYLLKEGQRWLTEARKETVMGQPIPKTPRQLREFLGTAGFCRLWIPGFAEMAAPLYPLTKTGTLFNWGPDQQKAFQEIKQALLTAPALGLPDLTKPFELFVDEKQGYAKGVLTQKLGPWRRPVAYLSKKLDPVAAGWPPCLRMVAAIAVLTKDAGKLTMGQPLVILAPHAVEALVKQPPDRWLSNARMTHYQALLLDTDRVQFGPVVALNPATLLPLPEEGLQHDCLDILAEAHGTRSDLMDQPLPDADHTWYTDGSSFLQEGQRKAGAAVTTETEVIWARALPAGTSAQRAELIALTQALKMAEGKKLNVYTDSRYAFATAHIHGEIYRRRGLLTSEGKEIKNKDEILALLKALFLPKRLSIIHCPGHQKGNSAEARGNRMADQAAREVATRETPETSTLLIENSTPYTHEHFHYTVTDTKDLTKLGATYDSAKKYWVYQGKPVMPDQFTFELLDFLHQLTHLSFSKTKALLERSPSPYYMLNRDRTLKNITETCKACAQVNASKSAVKQGTRVRGHRPGTHWEIDFTEVKPGLYGYKYLLVFVDTFSGWIEAFPTKKETAKVVTKKLLEEIFPRFGMPQVLGTDNGPAFVSKVSQTVADLLGIDWKLHCAYRPQSSGQVERMNRTIKETLTKLTLATGSRDWVLLLPLALYRARNTPGPHGLTPYEILYGAPPPLVNFPDPDMTRVTNSPSLQAHLQALYLVQHEVWRPLAAAYQEQLDRPVVPHPYRVGDTVWVRRHQTKNLEPRWKGPYTVLLTTPTALKVDGISAWVHAAHVKAATTSPARTAWKVQRSQNPLKIRLSREPS.

G2 is lipidated: N-myristoyl glycine; by host. A PTAP/PSAP motif motif is present at residues 109-112; that stretch reads PSAP. The span at 112 to 121 shows a compositional bias: pro residues; that stretch reads PSLLPEPPLS. Disordered regions lie at residues 112–196 and 202–221; these read PSLL…ASRL and LPVADSTTSQAFPLRSGGNG. Residues 128-132 carry the LYPX(n)L motif motif; the sequence is LYPAL. Over residues 159 to 170 the composition is skewed to pro residues; it reads DPPPYRDPGPPP. Positions 160 to 163 match the PPXY motif motif; the sequence is PPPY. S190 carries the phosphoserine; by host modification. The tract at residues 343 to 391 is interaction with host PIAS4; the sequence is GRSPTNLAKVKGITQGPNESPSAFLERLKEAYRRYTPYDPEDPGQETNV. Residues 428-433 are interaction with host UBE2I; sequence IFNKRE. 2 stretches are compositionally biased toward basic and acidic residues: residues 432-464 and 484-496; these read RETPEEREERIKRETEEKEERRRAEDEQKEKER and KQDRQGGERRRPQ. 2 disordered regions span residues 432-496 and 511-550; these read RETP…RRPQ and WAKDCPKKPRGPRGPRPQTSLLALDDQGGRGQEPPPEPRI. The stretch at 436 to 476 forms a coiled coil; that stretch reads EEREERIKRETEEKEERRRAEDEQKEKERDRRRHREMSKLL. The CCHC-type zinc finger occupies 500 to 517; it reads DQCAYCKEKGHWAKDCPK. In terms of domain architecture, Peptidase A2 spans 559–629; it reads VTFLVDTGAQ…CPYPLLGRDL (71 aa). D564 acts as the Protease; shared with dimeric partner in catalysis. Residues 739 to 930 form the Reverse transcriptase domain; the sequence is LDQGILVPCQ…KQVKYLGYLL (192 aa). Residues D807, D881, D882, D1181, E1219, D1240, and D1310 each coordinate Mg(2+). The region spanning 1172 to 1318 is the RNase H type-1 domain; that stretch reads PDADHTWYTD…ADQAAREVAT (147 aa). The HHCC-type zinc finger occupies 1385 to 1425; that stretch reads HQLTHLSFSKTKALLERSPSPYYMLNRDRTLKNITETCKAC. The 159-residue stretch at 1442 to 1600 folds into the Integrase catalytic domain; sequence RGHRPGTHWE…TPYEILYGAP (159 aa). Mg(2+) contacts are provided by D1453 and D1512.

Homohexamer; further associates as homomultimer. The virus core is composed of a lattice formed from hexagonal rings, each containing six capsid monomers. Interacts with mouse UBE2I and mouse PIAS4. In terms of assembly, interacts (via PPXY motif) with host NEDD4. Interacts (via PSAP motif) with host TSG101. Interacts (via LYPX(n)L motif) with host PDCD6IP. As to quaternary structure, the reverse transcriptase is a monomer (Potential). Interacts (via RNase domains) with host release factor ETF1; this interaction is essential for translational readthrough of amber codon between viral gag and pol genes, as well as for viral replication. Homodimer. It depends on Mg(2+) as a cofactor. Post-translationally, ubiquitinated by ITCH. Gag can recruit the ubiquitin ligase Itch in an L domain-independent manner to facilitate virus release via a mechanism that involves Gag ubiquitination. In terms of processing, specific enzymatic cleavages by the viral protease yield mature proteins. The protease is released by autocatalytic cleavage. The polyprotein is cleaved during and after budding, this process is termed maturation. Sumoylated; which is required for virus replication. Post-translationally, phosphorylated on serine residues.

The protein localises to the virion. It localises to the host cell membrane. Its subcellular location is the host late endosome membrane. It is found in the host endosome. The protein resides in the host multivesicular body. The protein localises to the host cytoplasm. It catalyses the reaction DNA(n) + a 2'-deoxyribonucleoside 5'-triphosphate = DNA(n+1) + diphosphate. The catalysed reaction is Endonucleolytic cleavage to 5'-phosphomonoester.. With respect to regulation, most efficiently inhibited by Amprenavir, which is able to block Gag-Pol processing in infected cells. Plays a role in budding and is processed by the viral protease during virion maturation outside the cell. During budding, it recruits, in a PPXY-dependent or independent manner, Nedd4-like ubiquitin ligases that conjugate ubiquitin molecules to Gag-Pol, or to Gag-Pol binding host factors. Interaction with HECT ubiquitin ligases probably links the viral protein to the host ESCRT pathway and facilitates release. Its function is as follows. Targets Gag and gag-pol polyproteins to the plasma membrane via a multipartite membrane binding signal, that includes its myristoylated N-terminus. Also mediates nuclear localization of the pre-integration complex. In terms of biological role, constituent of the pre-integration complex (PIC) which tethers the latter to mitotic chromosomes. This allows the integration of the viral genome into the host DNA. Functionally, forms the spherical core of the virion that encapsulates the genomic RNA-nucleocapsid complex. Involved in the packaging and encapsidation of two copies of the genome. Binds with high affinity to conserved UCUG elements within the packaging signal, located near the 5'-end of the genome. This binding is dependent on genome dimerization. Acts as a nucleic acid chaperone which is involved in rearrangement of nucleic acid secondary structures during gRNA retrotranscription. Its function is as follows. The aspartyl protease mediates proteolytic cleavages of Gag and Gag-Pol polyproteins during or shortly after the release of the virion from the plasma membrane. Cleavages take place as an ordered, step-wise cascade to yield mature proteins. This process is called maturation. Displays maximal activity during the budding process just prior to particle release from the cell (Potential). Cleaves the translation initiation factor eIF4G leading to the inhibition of host cap-dependent translation. In terms of biological role, RT is a multifunctional enzyme that converts the viral dimeric RNA genome into dsDNA in the cytoplasm, shortly after virus entry into the cell. This enzyme displays a DNA polymerase activity that can copy either DNA or RNA templates, and a ribonuclease H (RNase H) activity that cleaves the RNA strand of RNA-DNA heteroduplexes in a partially processive 3' to 5' endonucleasic mode. Conversion of viral genomic RNA into dsDNA requires many steps. A tRNA binds to the primer-binding site (PBS) situated at the 5' end of the viral RNA. RT uses the 3' end of the tRNA primer to perform a short round of RNA-dependent minus-strand DNA synthesis. The reading proceeds through the U5 region and ends after the repeated (R) region which is present at both ends of viral RNA. The portion of the RNA-DNA heteroduplex is digested by the RNase H, resulting in a ssDNA product attached to the tRNA primer. This ssDNA/tRNA hybridizes with the identical R region situated at the 3' end of viral RNA. This template exchange, known as minus-strand DNA strong stop transfer, can be either intra- or intermolecular. RT uses the 3' end of this newly synthesized short ssDNA to perform the RNA-dependent minus-strand DNA synthesis of the whole template. RNase H digests the RNA template except for a polypurine tract (PPT) situated at the 5' end of the genome. It is not clear if both polymerase and RNase H activities are simultaneous. RNase H probably can proceed both in a polymerase-dependent (RNA cut into small fragments by the same RT performing DNA synthesis) and a polymerase-independent mode (cleavage of remaining RNA fragments by free RTs). Secondly, RT performs DNA-directed plus-strand DNA synthesis using the PPT that has not been removed by RNase H as primers. PPT and tRNA primers are then removed by RNase H. The 3' and 5' ssDNA PBS regions hybridize to form a circular dsDNA intermediate. Strand displacement synthesis by RT to the PBS and PPT ends produces a blunt ended, linear dsDNA copy of the viral genome that includes long terminal repeats (LTRs) at both ends. Functionally, catalyzes viral DNA integration into the host chromosome, by performing a series of DNA cutting and joining reactions. This enzyme activity takes place after virion entry into a cell and reverse transcription of the RNA genome in dsDNA. The first step in the integration process is 3' processing. This step requires a complex comprising the viral genome, matrix protein and integrase. This complex is called the pre-integration complex (PIC). The integrase protein removes 2 nucleotides from each 3' end of the viral DNA, leaving recessed CA OH's at the 3' ends. In the second step that requires cell division, the PIC enters cell nucleus. In the third step, termed strand transfer, the integrase protein joins the previously processed 3' ends to the 5' ends of strands of target cellular DNA at the site of integration. The last step is viral DNA integration into host chromosome. The chain is Gag-Pol polyprotein (gag-pol) from Cas-Br-E murine leukemia virus.